The sequence spans 169 residues: Large ribosomal subunit protein uL10 (169 aa).

This sequence belongs to the universal ribosomal protein uL10 family. Part of the ribosomal stalk of the 50S ribosomal subunit. The N-terminus interacts with L11 and the large rRNA to form the base of the stalk. The C-terminus forms an elongated spine to which L12 dimers bind in a sequential fashion forming a multimeric L10(L12)X complex.

In terms of biological role, forms part of the ribosomal stalk, playing a central role in the interaction of the ribosome with GTP-bound translation factors. The chain is Large ribosomal subunit protein uL10 from Rickettsia akari (strain Hartford).